Reading from the N-terminus, the 316-residue chain is Acetaldehyde dehydrogenase (316 aa).

11-14 lines the NAD(+) pocket; that stretch reads SGNI. The Acyl-thioester intermediate role is filled by Cys-131. NAD(+) is bound by residues 162-170 and Asn-289; that span reads SAGPGTRAN.

It belongs to the acetaldehyde dehydrogenase family. Interacts with MhpE.

It carries out the reaction acetaldehyde + NAD(+) + CoA = acetyl-CoA + NADH + H(+). It functions in the pathway aromatic compound metabolism; 3-phenylpropanoate degradation. In terms of biological role, catalyzes the conversion of acetaldehyde to acetyl-CoA, using NAD(+) and coenzyme A. Is the final enzyme in the meta-cleavage pathway for the degradation of aromatic compounds. This is Acetaldehyde dehydrogenase from Shigella sonnei (strain Ss046).